The primary structure comprises 90 residues: Large ribosomal subunit protein bL27 (90 aa).

Residues 1-21 (MAHTKAGGTTRNSRDSAGRRL) form a disordered region.

It belongs to the bacterial ribosomal protein bL27 family.

The protein is Large ribosomal subunit protein bL27 of Metamycoplasma arthritidis (strain 158L3-1) (Mycoplasma arthritidis).